The primary structure comprises 951 residues: Thyroid hormone receptor-associated protein 3 (951 aa).

Positions 1–13 are enriched in low complexity; it reads MSKTNKSKSGSRS. A disordered region spans residues 1 to 94; sequence MSKTNKSKSG…YFRGRNRGFY (94 aa). Serine 2 carries the N-acetylserine modification. The interval 2–190 is required for mRNA splicing activation; the sequence is SKTNKSKSGS…KSSSKDSRPS (189 aa). Residues 14–51 show a composition bias toward basic residues; it reads SRSRSASRSRSRSFSKSRSRSRSVSRSRKRRLSSRSRS. A Dimethylated arginine modification is found at arginine 17. Over residues 58–75 the composition is skewed to basic and acidic residues; it reads HNRERNHPRVYQNRDFRG. Asymmetric dimethylarginine is present on arginine 66. Residues 82–94 show a composition bias toward low complexity; it reads RPYYFRGRNRGFY. Asymmetric dimethylarginine occurs at positions 101 and 108. The disordered stretch occupies residues 117–558; the sequence is AYSPRRGRSR…GDFSSGKSSF (442 aa). Positions 121–143 are enriched in basic residues; sequence RRGRSRSRSPKRRSPSPRSRSHS. The span at 144–155 shows a compositional bias: basic and acidic residues; that stretch reads RNSDKSSSDRSR. A compositionally biased stretch (low complexity) spans 157–166; sequence SSSSRSSSNH. Basic and acidic residues predominate over residues 167-188; the sequence is SRVESSKRKSTKEKKSSSKDSR. Residue lysine 202 forms a Glycyl lysine isopeptide (Lys-Gly) (interchain with G-Cter in SUMO1); alternate linkage. Lysine 202 is covalently cross-linked (Glycyl lysine isopeptide (Lys-Gly) (interchain with G-Cter in SUMO2); alternate). Over residues 204-220 the composition is skewed to polar residues; the sequence is QTFSGGTSQDIKGSESS. Lysine 215 is covalently cross-linked (Glycyl lysine isopeptide (Lys-Gly) (interchain with G-Cter in SUMO2)). Residue serine 220 is modified to Phosphoserine. Lysine 221 is covalently cross-linked (Glycyl lysine isopeptide (Lys-Gly) (interchain with G-Cter in SUMO2); alternate). Position 221 is an N6-acetyllysine; alternate (lysine 221). Phosphoserine occurs at positions 233, 238, 240, 243, and 248. Lysine 252 participates in a covalent cross-link: Glycyl lysine isopeptide (Lys-Gly) (interchain with G-Cter in SUMO2); alternate. Lysine 252 is subject to N6-methyllysine; alternate. Serine 253 and serine 257 each carry phosphoserine. A compositionally biased stretch (pro residues) spans 266-276; the sequence is RPSPVPKPSPP. The span at 305–322 shows a compositional bias: low complexity; it reads GSGSLSPSKKSPVGKSPP. A phosphoserine mark is found at serine 315 and serine 320. Threonine 324 is modified (phosphothreonine). Serine 326 carries the post-translational modification Phosphoserine. Tyrosine 328 is modified (phosphotyrosine). Lysine 333 is covalently cross-linked (Glycyl lysine isopeptide (Lys-Gly) (interchain with G-Cter in SUMO2)). The segment covering 337–346 has biased composition (low complexity); sequence AASGGAAYSK. At serine 339 the chain carries Phosphoserine. A Glycyl lysine isopeptide (Lys-Gly) (interchain with G-Cter in SUMO2); alternate cross-link involves residue lysine 346. N6-acetyllysine; alternate is present on lysine 346. Basic and acidic residues predominate over residues 347-387; the sequence is RYLEEQKTENGKDKEQKQTNADKEKLKEKGGFSDADVKMKS. Residues lysine 353 and lysine 375 each participate in a glycyl lysine isopeptide (Lys-Gly) (interchain with G-Cter in SUMO2) cross-link. The required for mRNA decay activity stretch occupies residues 359–951; it reads DKEQKQTNAD…EKDSLQPSAE (593 aa). Serine 379 bears the Phosphoserine mark. A Glycyl lysine isopeptide (Lys-Gly) (interchain with G-Cter in SUMO1); alternate cross-link involves residue lysine 384. A Glycyl lysine isopeptide (Lys-Gly) (interchain with G-Cter in SUMO2); alternate cross-link involves residue lysine 384. Glycyl lysine isopeptide (Lys-Gly) (interchain with G-Cter in SUMO2) cross-links involve residues lysine 386 and lysine 393. Phosphothreonine is present on threonine 394. A Glycyl lysine isopeptide (Lys-Gly) (interchain with G-Cter in SUMO2) cross-link involves residue lysine 398. Residues serine 403 and serine 405 each carry the phosphoserine modification. The segment covering 411–449 has biased composition (basic and acidic residues); that stretch reads LRDDFEKKMADFHKEELDEHDKDKSKGRKEPEFDDEPKF. Glycyl lysine isopeptide (Lys-Gly) (interchain with G-Cter in SUMO2) cross-links involve residues lysine 418 and lysine 424. A Glycyl lysine isopeptide (Lys-Gly) (interchain with G-Cter in SUMO1); alternate cross-link involves residue lysine 448. Residues lysine 448 and lysine 452 each participate in a glycyl lysine isopeptide (Lys-Gly) (interchain with G-Cter in SUMO2); alternate cross-link. Residue lysine 452 is modified to N6-acetyllysine; alternate. Glycyl lysine isopeptide (Lys-Gly) (interchain with G-Cter in SUMO2) cross-links involve residues lysine 459 and lysine 465. Composition is skewed to basic and acidic residues over residues 460-483 and 490-518; these read NQEE…RKAE and FTER…EKNF. Serine 466 carries the post-translational modification Phosphoserine. Residues lysine 468 and lysine 476 each participate in a glycyl lysine isopeptide (Lys-Gly) (interchain with G-Cter in SUMO2); alternate cross-link. Lysine 468 and lysine 476 each carry N6-acetyllysine; alternate. A Glycyl lysine isopeptide (Lys-Gly) (interchain with G-Cter in SUMO2) cross-link involves residue lysine 481. The residue at position 516 (lysine 516) is an N6-acetyllysine. Residue lysine 524 forms a Glycyl lysine isopeptide (Lys-Gly) (interchain with G-Cter in SUMO2); alternate linkage. N6-acetyllysine; alternate is present on lysine 524. Serine 532 carries the post-translational modification Phosphoserine. Over residues 537–547 the composition is skewed to basic and acidic residues; that stretch reads KTSESRDKLGS. Lysine 548 participates in a covalent cross-link: Glycyl lysine isopeptide (Lys-Gly) (interchain with G-Cter in SUMO2). Residues 548 to 558 show a composition bias toward low complexity; the sequence is KGDFSSGKSSF. 549-556 contacts ATP; the sequence is GDFSSGKS. Residue lysine 555 forms a Glycyl lysine isopeptide (Lys-Gly) (interchain with G-Cter in SUMO2); alternate linkage. An N6-acetyllysine; alternate modification is found at lysine 555. Serine 557, serine 559, and serine 572 each carry phosphoserine. A Glycyl lysine isopeptide (Lys-Gly) (interchain with G-Cter in SUMO2) cross-link involves residue lysine 599. Residues serine 616, serine 619, serine 669, serine 679, and serine 681 each carry the phosphoserine modification. Over residues 660–677 the composition is skewed to basic and acidic residues; that stretch reads EQEAAKNKKSPEIHRRID. Residues 660-951 are disordered; sequence EQEAAKNKKS…EKDSLQPSAE (292 aa). Positions 688–758 are enriched in basic and acidic residues; sequence LTHEELKSPR…RSTEKTEKTH (71 aa). Lysine 694 is covalently cross-linked (Glycyl lysine isopeptide (Lys-Gly) (interchain with G-Cter in SUMO2)). Serine 695 carries the post-translational modification Phosphoserine. Residues lysine 702, lysine 706, lysine 708, lysine 753, and lysine 756 each participate in a glycyl lysine isopeptide (Lys-Gly) (interchain with G-Cter in SUMO2) cross-link. The segment covering 759–772 has biased composition (basic residues); sequence KGSKKQKKHRRARD. Residues 776 to 786 show a composition bias toward low complexity; it reads SSSSSSQSSHS. Lysine 808 is modified (N6-acetyllysine). Arginine 841 carries the post-translational modification Asymmetric dimethylarginine. The span at 844 to 854 shows a compositional bias: low complexity; it reads YSGNNNNNSNN. Serine 860 bears the Phosphoserine mark. Position 870 is a phosphothreonine (threonine 870). Glycyl lysine isopeptide (Lys-Gly) (interchain with G-Cter in SUMO2) cross-links involve residues lysine 872 and lysine 875. A compositionally biased stretch (basic and acidic residues) spans 877–891; it reads YLHDDREGEGSDKWM. A phosphoserine mark is found at serine 924 and serine 935. Acidic residues predominate over residues 926–936; that stretch reads EEGEIEDDESG.

It belongs to the BCLAF1/THRAP3 family. Associated with the large multiprotein complex TRAP (Mediator complex-like). Interacts with SFPQ; the interaction is dependent on SFPQ phosphorylation at 'Thr-687' and inhibits binding of SFPQ to an ESS1 exonic splicing silencer element-containing RNA. Interacts with NXF1. Component of the SNARP complex which consists at least of SNIP1, SNW1, THRAP3, BCLAF1 and PNN. Associated with spliced mRNP complexes. Interacts with HELZ2 and PPARG. Interacts with CLOCK and BMAL1. Component of a MACOM-like complex, named WTAP complex, composed of WTAP, ZC3H13, CBLL1, KIAA1429, RBM15, BCLAF1 and THRAP3.

Its subcellular location is the nucleus. The protein resides in the nucleoplasm. It localises to the nucleus speckle. Involved in pre-mRNA splicing. Remains associated with spliced mRNA after splicing which probably involves interactions with the exon junction complex (EJC). Can trigger mRNA decay which seems to be independent of nonsense-mediated decay involving premature stop codons (PTC) recognition. May be involved in nuclear mRNA decay. Involved in regulation of signal-induced alternative splicing. During splicing of PTPRC/CD45 is proposed to sequester phosphorylated SFPQ from PTPRC/CD45 pre-mRNA in resting T-cells. Involved in cyclin-D1/CCND1 mRNA stability probably by acting as component of the SNARP complex which associates with both the 3'end of the CCND1 gene and its mRNA. Involved in response to DNA damage. Is excluced from DNA damage sites in a manner that parallels transcription inhibition; the function may involve the SNARP complex. Initially thought to play a role in transcriptional coactivation through its association with the TRAP complex; however, it is not regarded as a stable Mediator complex subunit. Cooperatively with HELZ2, enhances the transcriptional activation mediated by PPARG, maybe through the stabilization of the PPARG binding to DNA in presence of ligand. May play a role in the terminal stage of adipocyte differentiation. Plays a role in the positive regulation of the circadian clock. Acts as a coactivator of the CLOCK-BMAL1 heterodimer and promotes its transcriptional activator activity and binding to circadian target genes. The sequence is that of Thyroid hormone receptor-associated protein 3 (Thrap3) from Mus musculus (Mouse).